The following is a 263-amino-acid chain: Glucosamine-6-phosphate deaminase (263 aa).

Catalysis depends on D72, which acts as the Proton acceptor; for enolization step. Residue D141 is the For ring-opening step of the active site. The active-site Proton acceptor; for ring-opening step is the H143. Catalysis depends on E148, which acts as the For ring-opening step.

The protein belongs to the glucosamine/galactosamine-6-phosphate isomerase family. NagB subfamily.

It catalyses the reaction alpha-D-glucosamine 6-phosphate + H2O = beta-D-fructose 6-phosphate + NH4(+). The protein operates within amino-sugar metabolism; N-acetylneuraminate degradation; D-fructose 6-phosphate from N-acetylneuraminate: step 5/5. Allosterically activated by N-acetylglucosamine 6-phosphate (GlcNAc6P). Catalyzes the reversible isomerization-deamination of glucosamine 6-phosphate (GlcN6P) to form fructose 6-phosphate (Fru6P) and ammonium ion. In Porphyromonas gingivalis (strain ATCC BAA-308 / W83), this protein is Glucosamine-6-phosphate deaminase.